The sequence spans 490 residues: Cis-aconitate decarboxylase (490 aa).

Belongs to the PrpD family.

The protein localises to the mitochondrion. It carries out the reaction cis-aconitate + H(+) = itaconate + CO2. In terms of biological role, involved in the production of itaconic acid, a soluble unsaturated dicarboxylic acid mainly produced from sugars. This chain is Cis-aconitate decarboxylase (cad1), found in Aspergillus terreus.